The chain runs to 81 residues: Large ribosomal subunit protein bL31B (81 aa).

The protein belongs to the bacterial ribosomal protein bL31 family. Type B subfamily. In terms of assembly, part of the 50S ribosomal subunit.

The chain is Large ribosomal subunit protein bL31B from Listeria innocua serovar 6a (strain ATCC BAA-680 / CLIP 11262).